The primary structure comprises 200 residues: Probable nicotinate-nucleotide adenylyltransferase (200 aa).

This sequence belongs to the NadD family.

It carries out the reaction nicotinate beta-D-ribonucleotide + ATP + H(+) = deamido-NAD(+) + diphosphate. It functions in the pathway cofactor biosynthesis; NAD(+) biosynthesis; deamido-NAD(+) from nicotinate D-ribonucleotide: step 1/1. In terms of biological role, catalyzes the reversible adenylation of nicotinate mononucleotide (NaMN) to nicotinic acid adenine dinucleotide (NaAD). The protein is Probable nicotinate-nucleotide adenylyltransferase of Clavibacter sepedonicus (Clavibacter michiganensis subsp. sepedonicus).